The sequence spans 216 residues: Protein-L-isoaspartate O-methyltransferase (216 aa).

The active site involves serine 61.

This sequence belongs to the methyltransferase superfamily. L-isoaspartyl/D-aspartyl protein methyltransferase family.

The protein localises to the cytoplasm. The catalysed reaction is [protein]-L-isoaspartate + S-adenosyl-L-methionine = [protein]-L-isoaspartate alpha-methyl ester + S-adenosyl-L-homocysteine. Functionally, catalyzes the methyl esterification of L-isoaspartyl residues in peptides and proteins that result from spontaneous decomposition of normal L-aspartyl and L-asparaginyl residues. It plays a role in the repair and/or degradation of damaged proteins. This chain is Protein-L-isoaspartate O-methyltransferase, found in Dinoroseobacter shibae (strain DSM 16493 / NCIMB 14021 / DFL 12).